The primary structure comprises 51 residues: Defensin (51 aa).

3 disulfide bridges follow: C3–C31, C17–C36, and C21–C38. F51 carries the post-translational modification Phenylalanine amide.

The protein localises to the secreted. Antibacterial peptide against Gram-positive and Gram-negative bacteria and fungi. This is Defensin from Bombus pascuorum (Common carder bumblebee).